The sequence spans 128 residues: Modulator protein MzrA (128 aa).

Residues 1-11 (MMVMKRPSLRQ) lie on the Cytoplasmic side of the membrane. Residues 12-32 (FSWLLGGSLLLGALFWLWLAV) traverse the membrane as a helical segment. The Periplasmic portion of the chain corresponds to 33–128 (QQQEATLAIR…RLRDAPHRLG (96 aa)).

Belongs to the MzrA family. As to quaternary structure, interacts with EnvZ.

The protein resides in the cell inner membrane. In terms of biological role, modulates the activity of the EnvZ/OmpR two-component regulatory system, probably by directly modulating EnvZ enzymatic activity and increasing stability of phosphorylated OmpR. This chain is Modulator protein MzrA, found in Klebsiella pneumoniae subsp. pneumoniae (strain ATCC 700721 / MGH 78578).